Reading from the N-terminus, the 209-residue chain is ATP-dependent Clp protease proteolytic subunit (209 aa).

S107 (nucleophile) is an active-site residue. H132 is a catalytic residue.

It belongs to the peptidase S14 family. Fourteen ClpP subunits assemble into 2 heptameric rings which stack back to back to give a disk-like structure with a central cavity, resembling the structure of eukaryotic proteasomes.

It is found in the cytoplasm. The catalysed reaction is Hydrolysis of proteins to small peptides in the presence of ATP and magnesium. alpha-casein is the usual test substrate. In the absence of ATP, only oligopeptides shorter than five residues are hydrolyzed (such as succinyl-Leu-Tyr-|-NHMec, and Leu-Tyr-Leu-|-Tyr-Trp, in which cleavage of the -Tyr-|-Leu- and -Tyr-|-Trp bonds also occurs).. Functionally, cleaves peptides in various proteins in a process that requires ATP hydrolysis. Has a chymotrypsin-like activity. Plays a major role in the degradation of misfolded proteins. In Methylobacterium nodulans (strain LMG 21967 / CNCM I-2342 / ORS 2060), this protein is ATP-dependent Clp protease proteolytic subunit.